A 215-amino-acid polypeptide reads, in one-letter code: Ribose-5-phosphate isomerase A (215 aa).

Substrate is bound by residues 26-29, 79-82, and 92-95; these read TGST, DGAD, and KGGG. The active-site Proton acceptor is E101. K119 contacts substrate.

The protein belongs to the ribose 5-phosphate isomerase family. Homodimer.

The enzyme catalyses aldehydo-D-ribose 5-phosphate = D-ribulose 5-phosphate. It participates in carbohydrate degradation; pentose phosphate pathway; D-ribose 5-phosphate from D-ribulose 5-phosphate (non-oxidative stage): step 1/1. Catalyzes the reversible conversion of ribose-5-phosphate to ribulose 5-phosphate. This is Ribose-5-phosphate isomerase A from Xanthomonas axonopodis pv. citri (strain 306).